Reading from the N-terminus, the 407-residue chain is Carbamoyl phosphate synthase small chain (407 aa).

Positions 1 to 205 (MTETTPKTAP…LQDGYGEQDA (205 aa)) are CPSase. L-glutamine contacts are provided by Ser-60, Gly-257, and Gly-259. In terms of domain architecture, Glutamine amidotransferase type-1 spans 209-397 (HVVALDFGVK…INLIRERKGQ (189 aa)). Cys-286 serves as the catalytic Nucleophile. 5 residues coordinate L-glutamine: Leu-287, Gln-290, Asn-328, Gly-330, and Phe-331. Residues His-370 and Glu-372 contribute to the active site.

This sequence belongs to the CarA family. In terms of assembly, composed of two chains; the small (or glutamine) chain promotes the hydrolysis of glutamine to ammonia, which is used by the large (or ammonia) chain to synthesize carbamoyl phosphate. Tetramer of heterodimers (alpha,beta)4.

It catalyses the reaction hydrogencarbonate + L-glutamine + 2 ATP + H2O = carbamoyl phosphate + L-glutamate + 2 ADP + phosphate + 2 H(+). The catalysed reaction is L-glutamine + H2O = L-glutamate + NH4(+). It functions in the pathway amino-acid biosynthesis; L-arginine biosynthesis; carbamoyl phosphate from bicarbonate: step 1/1. The protein operates within pyrimidine metabolism; UMP biosynthesis via de novo pathway; (S)-dihydroorotate from bicarbonate: step 1/3. In terms of biological role, small subunit of the glutamine-dependent carbamoyl phosphate synthetase (CPSase). CPSase catalyzes the formation of carbamoyl phosphate from the ammonia moiety of glutamine, carbonate, and phosphate donated by ATP, constituting the first step of 2 biosynthetic pathways, one leading to arginine and/or urea and the other to pyrimidine nucleotides. The small subunit (glutamine amidotransferase) binds and cleaves glutamine to supply the large subunit with the substrate ammonia. This is Carbamoyl phosphate synthase small chain from Brucella canis (strain ATCC 23365 / NCTC 10854 / RM-666).